A 195-amino-acid chain; its full sequence is Cysteine/O-acetylserine efflux protein (195 aa).

Over 1 to 9 (MTPMLLSAF) the chain is Periplasmic. A helical membrane pass occupies residues 10–32 (WTYTLITALTPGPNNILALSAAT). The Cytoplasmic segment spans residues 33-46 (AHGFRQSIRVLAGM). A helical membrane pass occupies residues 47–67 (SLGFLVVMLLCAGIAFSLAVI). The Periplasmic segment spans residues 68–69 (DP). Residues 70–90 (AIIHLLSWVGAAYILWLAWKI) traverse the membrane as a helical segment. Topologically, residues 91 to 104 (ATSPAADENARPKP) are cytoplasmic. The helical transmembrane segment at 105–125 (VGFWVSFGLQFVNVKIILYGI) threads the bilayer. The Periplasmic segment spans residues 126–141 (TALSTFVLPQTQALNW). A helical transmembrane segment spans residues 142–162 (VIGVSILLALIGTFGNVCWAL). Topologically, residues 163–176 (AGHLFQRAFRHYGR) are cytoplasmic. The chain crosses the membrane as a helical span at residues 177–194 (QLNIILALLLVYCAVRIF). Position 195 (tyrosine 195) is a topological domain, periplasmic.

Belongs to the Rht family.

It is found in the cell inner membrane. It carries out the reaction O-acetyl-L-serine(in) = O-acetyl-L-serine(out). It catalyses the reaction L-cysteine(in) = L-cysteine(out). Its function is as follows. Exporter of O-acetylserine (OAS) and cysteine. The protein is Cysteine/O-acetylserine efflux protein (eamB) of Salmonella choleraesuis (strain SC-B67).